Reading from the N-terminus, the 220-residue chain is Deoxyribose-phosphate aldolase (220 aa).

The Proton donor/acceptor role is filled by D92. The Schiff-base intermediate with acetaldehyde role is filled by K155. The active-site Proton donor/acceptor is K184.

The protein belongs to the DeoC/FbaB aldolase family. DeoC type 1 subfamily.

It is found in the cytoplasm. It carries out the reaction 2-deoxy-D-ribose 5-phosphate = D-glyceraldehyde 3-phosphate + acetaldehyde. It functions in the pathway carbohydrate degradation; 2-deoxy-D-ribose 1-phosphate degradation; D-glyceraldehyde 3-phosphate and acetaldehyde from 2-deoxy-alpha-D-ribose 1-phosphate: step 2/2. Its function is as follows. Catalyzes a reversible aldol reaction between acetaldehyde and D-glyceraldehyde 3-phosphate to generate 2-deoxy-D-ribose 5-phosphate. The polypeptide is Deoxyribose-phosphate aldolase (Symbiobacterium thermophilum (strain DSM 24528 / JCM 14929 / IAM 14863 / T)).